We begin with the raw amino-acid sequence, 438 residues long: Exosome complex component RRP45 (438 aa).

Serine 65 is modified (phosphoserine). Position 297 is an N6-acetyllysine; alternate (lysine 297). Lysine 297 is covalently cross-linked (Glycyl lysine isopeptide (Lys-Gly) (interchain with G-Cter in SUMO1); alternate). Residue lysine 297 forms a Glycyl lysine isopeptide (Lys-Gly) (interchain with G-Cter in SUMO2); alternate linkage. Residues serine 306 and serine 346 each carry the phosphoserine modification. Disordered stretches follow at residues 337 to 365 (AQIGDGIENSWGDLEDSEKEEEEEEGGID) and 377 to 438 (TGEV…RTAN). Over residues 349–364 (DLEDSEKEEEEEEGGI) the composition is skewed to acidic residues. 2 positions are modified to phosphoserine: serine 393 and serine 395. The span at 427–438 (QGKRKKKKRTAN) shows a compositional bias: basic residues.

It belongs to the RNase PH family. As to quaternary structure, component of the RNA exosome core complex (Exo-9), composed of EXOSC1, EXOSC2, EXOSC3, EXOSC4, EXOSC5, EXOSC6, EXOSC7, EXOSC8 and EXOSC9; within the complex interacts with EXOSC3, EXOSC4, EXOSC5 and DIS3. The catalytically inactive RNA exosome core complex (Exo-9) associates with the catalytic subunit EXOSC10/RRP6. Exo-9 may associate with DIS3 to form the nucleolar exosome complex, or DIS3L to form the cytoplasmic exosome complex. Exo-9 is formed by a hexameric base ring consisting of the heterodimers EXOSC4-EXOSC9, EXOSC5-EXOSC8 and EXOSC6-EXOSC7, and a cap ring consisting of EXOSC1, EXOSC2 and EXOSC3. The RNA exosome complex associates with cofactors C1D/RRP47, MPHOSPH6/MPP6 and MTREX/MTR4. Interacts (via C-terminus region) with SETX (via N-terminus domain); the interaction enhances SETX sumoylation. Interacts with DIS3; the interaction is direct.

Its subcellular location is the cytoplasm. The protein resides in the nucleus. The protein localises to the nucleolus. It is found in the nucleoplasm. Its function is as follows. Non-catalytic component of the RNA exosome complex which has 3'-&gt;5' exoribonuclease activity and participates in a multitude of cellular RNA processing and degradation events. In the nucleus, the RNA exosome complex is involved in proper maturation of stable RNA species such as rRNA, snRNA and snoRNA, in the elimination of RNA processing by-products and non-coding 'pervasive' transcripts, such as antisense RNA species and promoter-upstream transcripts (PROMPTs), and of mRNAs with processing defects, thereby limiting or excluding their export to the cytoplasm. The RNA exosome may be involved in Ig class switch recombination (CSR) and/or Ig variable region somatic hypermutation (SHM) by targeting AICDA deamination activity to transcribed dsDNA substrates. In the cytoplasm, the RNA exosome complex is involved in general mRNA turnover and specifically degrades inherently unstable mRNAs containing AU-rich elements (AREs) within their 3' untranslated regions, and in RNA surveillance pathways, preventing translation of aberrant mRNAs. It seems to be involved in degradation of histone mRNA. The catalytic inactive RNA exosome core complex of 9 subunits (Exo-9) is proposed to play a pivotal role in the binding and presentation of RNA for ribonucleolysis, and to serve as a scaffold for the association with catalytic subunits and accessory proteins or complexes. EXOSC9 binds to ARE-containing RNAs. The polypeptide is Exosome complex component RRP45 (Exosc9) (Mus musculus (Mouse)).